Here is a 240-residue protein sequence, read N- to C-terminus: Octanoyltransferase (240 aa).

A BPL/LPL catalytic domain is found at 49-233 (GEAPELVWLL…AFESVFGATR (185 aa)). Substrate is bound by residues 87 to 94 (RGGQVTYH), 162 to 164 (AIG), and 175 to 177 (GIA). The Acyl-thioester intermediate role is filled by Cys193.

This sequence belongs to the LipB family.

Its subcellular location is the cytoplasm. It catalyses the reaction octanoyl-[ACP] + L-lysyl-[protein] = N(6)-octanoyl-L-lysyl-[protein] + holo-[ACP] + H(+). It participates in protein modification; protein lipoylation via endogenous pathway; protein N(6)-(lipoyl)lysine from octanoyl-[acyl-carrier-protein]: step 1/2. Catalyzes the transfer of endogenously produced octanoic acid from octanoyl-acyl-carrier-protein onto the lipoyl domains of lipoate-dependent enzymes. Lipoyl-ACP can also act as a substrate although octanoyl-ACP is likely to be the physiological substrate. In Bradyrhizobium sp. (strain BTAi1 / ATCC BAA-1182), this protein is Octanoyltransferase.